The primary structure comprises 1788 residues: Laminin subunit beta-1 (1788 aa).

The N-terminal stretch at 1 to 24 (MLELRLIVVIVLALLSWQWDPVDS) is a signal peptide. The interval 23–43 (DSQRPPQHGRRDRPKYPPNKF) is disordered. In terms of domain architecture, Laminin N-terminal spans 50–287 (ERSSCYPATG…GISNMVVRGS (238 aa)). N-linked (GlcNAc...) asparagine glycosylation is found at asparagine 138, asparagine 201, and asparagine 232. Cystine bridges form between cysteine 288–cysteine 297, cysteine 290–cysteine 318, cysteine 320–cysteine 329, cysteine 332–cysteine 352, cysteine 355–cysteine 364, cysteine 357–cysteine 382, cysteine 385–cysteine 394, cysteine 397–cysteine 415, cysteine 418–cysteine 431, cysteine 420–cysteine 446, cysteine 448–cysteine 457, cysteine 460–cysteine 475, cysteine 478–cysteine 491, cysteine 480–cysteine 498, cysteine 500–cysteine 509, cysteine 512–cysteine 526, cysteine 529–cysteine 541, cysteine 531–cysteine 548, and cysteine 550–cysteine 559. Laminin EGF-like domains follow at residues 288–354 (CSCY…ACKK), 355–417 (CECN…VCQP), 418–477 (CDCD…GCEP), and 478–528 (CTCN…GCSL). N-linked (GlcNAc...) asparagine glycosylation is present at asparagine 487. One can recognise a Laminin EGF-like 5; truncated domain in the interval 529-559 (CNCDAGGSYDNYCDVISGQCRCRPHMTGRSC). Residues 567 to 783 (FIPLLPEVHE…LDNILSVFVH (217 aa)) form the Laminin IV type B domain. Asparagine 591 carries N-linked (GlcNAc...) asparagine glycosylation. A Cell attachment site motif is present at residues 641 to 643 (RGD). 32 cysteine pairs are disulfide-bonded: cysteine 789–cysteine 801, cysteine 791–cysteine 808, cysteine 810–cysteine 819, cysteine 822–cysteine 834, cysteine 837–cysteine 849, cysteine 839–cysteine 856, cysteine 858–cysteine 867, cysteine 870–cysteine 880, cysteine 883–cysteine 892, cysteine 885–cysteine 899, cysteine 902–cysteine 911, cysteine 914–cysteine 930, cysteine 933–cysteine 949, cysteine 935–cysteine 960, cysteine 962–cysteine 971, cysteine 974–cysteine 988, cysteine 991–cysteine 1005, cysteine 993–cysteine 1012, cysteine 1015–cysteine 1024, cysteine 1027–cysteine 1040, cysteine 1043–cysteine 1057, cysteine 1045–cysteine 1064, cysteine 1066–cysteine 1075, cysteine 1078–cysteine 1091, cysteine 1094–cysteine 1106, cysteine 1096–cysteine 1113, cysteine 1115–cysteine 1124, cysteine 1127–cysteine 1139, cysteine 1142–cysteine 1154, cysteine 1144–cysteine 1161, cysteine 1163–cysteine 1172, and cysteine 1175–cysteine 1186. 8 consecutive Laminin EGF-like domains span residues 789–836 (CNCN…GCKA), 837–882 (CDCN…ECRV), 883–932 (CQCN…GCRP), 933–990 (CRCP…TCSK), 991–1042 (CECS…NCQQ), 1043–1093 (CECD…GCES), 1094–1141 (CNCD…KCQP), and 1142–1188 (CECD…HCSP). An N-linked (GlcNAc...) asparagine glycan is attached at asparagine 1051. The tract at residues 1189–1405 (CGECFNNWDL…SQIPELNNQV (217 aa)) is domain II. Residues asparagine 1246, asparagine 1301, asparagine 1330, and asparagine 1341 are each glycosylated (N-linked (GlcNAc...) asparagine). Positions 1255–1405 (EKLDYETQSL…SQIPELNNQV (151 aa)) form a coiled coil. Positions 1406 to 1432 (CGKPGDPCDSLCGGAGCGHCGGFLSCE) are domain alpha. The domain I stretch occupies residues 1433–1788 (HGAKTHSEEA…RGSHYRQCYT (356 aa)). Positions 1453 to 1505 (ITSKKDQADQTIRALTQAKLNASEAYEKAKRGFEQSERYLNQTNANIKLAENL) form a coiled coil. N-linked (GlcNAc...) asparagine glycans are attached at residues asparagine 1473, asparagine 1493, and asparagine 1515. A coiled-coil region spans residues 1540–1561 (EEIETLGDQINRAVSSLKNVEA). Residues asparagine 1581, asparagine 1644, and asparagine 1703 are each glycosylated (N-linked (GlcNAc...) asparagine). The stretch at 1608 to 1762 (QGKAKDAIQQ…QQLLRLQAEI (155 aa)) forms a coiled coil. Positions 1690–1719 (GEANNLQSATSATNQTLTDRASRSENARER) are disordered. The span at 1693–1708 (NNLQSATSATNQTLTD) shows a compositional bias: polar residues. Positions 1709-1719 (RASRSENARER) are enriched in basic and acidic residues.

Laminin is a complex glycoprotein, consisting of three different polypeptide chains (alpha, beta, gamma), which are bound to each other by disulfide bonds into a cross-shaped molecule comprising one long and three short arms with globules at each end. In terms of tissue distribution, found in the basement membranes (major component).

It is found in the secreted. The protein localises to the extracellular space. It localises to the extracellular matrix. The protein resides in the basement membrane. Its function is as follows. Binding to cells via a high affinity receptor, laminin is thought to mediate the attachment, migration and organization of cells into tissues during embryonic development by interacting with other extracellular matrix components. Required for Ndg localization to the basement membrane. This is Laminin subunit beta-1 (LanB1) from Drosophila melanogaster (Fruit fly).